Reading from the N-terminus, the 717-residue chain is Trimethylamine N-oxide transport system permease protein TmoV (717 aa).

The next 17 helical transmembrane spans lie at 10–30 (FFQW…IEVP), 69–89 (LPPL…FLMN), 120–140 (FMTF…ETIV), 153–173 (WAEL…ILGY), 175–195 (LSGK…SVFG), 206–226 (FILV…VMAF), 238–258 (ILLV…IVLF), 265–285 (AVII…LLGL), 319–339 (ILIG…ISAF), 355–375 (QLNI…AILL), 402–422 (ILFF…GSFY), 452–472 (IWDT…VDVL), 488–508 (LVLV…LVVG), 527–547 (LYMA…VGII), 574–594 (LIPV…AVIV), 643–663 (MLGL…GAFI), and 683–703 (GIGL…DHLI). The ABC transmembrane type-1 1 domain maps to 200 to 379 (SMQTLSFILV…LIAILLDKMS (180 aa)). In terms of domain architecture, ABC transmembrane type-1 2 spans 523–703 (ALVTLYMATF…FIGLIFDHLI (181 aa)).

Belongs to the binding-protein-dependent transport system permease family. The complex is probably composed of two ATP-binding proteins (TmoW), two transmembrane proteins (TmoV) and a solute-binding protein (TmoX).

It localises to the cell inner membrane. In terms of biological role, part of the ABC transporter complex TmoXWV involved in trimethylamine N-oxide (TMAO) import. Responsible for the translocation of the substrate across the membrane. The polypeptide is Trimethylamine N-oxide transport system permease protein TmoV (Pelagibacter ubique (strain HTCC1062)).